We begin with the raw amino-acid sequence, 214 residues long: ATP phosphoribosyltransferase (214 aa).

This sequence belongs to the ATP phosphoribosyltransferase family. Short subfamily. Heteromultimer composed of HisG and HisZ subunits.

It is found in the cytoplasm. It carries out the reaction 1-(5-phospho-beta-D-ribosyl)-ATP + diphosphate = 5-phospho-alpha-D-ribose 1-diphosphate + ATP. Its pathway is amino-acid biosynthesis; L-histidine biosynthesis; L-histidine from 5-phospho-alpha-D-ribose 1-diphosphate: step 1/9. In terms of biological role, catalyzes the condensation of ATP and 5-phosphoribose 1-diphosphate to form N'-(5'-phosphoribosyl)-ATP (PR-ATP). Has a crucial role in the pathway because the rate of histidine biosynthesis seems to be controlled primarily by regulation of HisG enzymatic activity. This chain is ATP phosphoribosyltransferase, found in Marinomonas sp. (strain MWYL1).